We begin with the raw amino-acid sequence, 101 residues long: Replication restart protein PriB (101 aa).

The SSB domain maps to Met1–Thr101.

This sequence belongs to the PriB family. In terms of assembly, homodimer. Interacts with PriA and DnaT. Component of the replication restart primosome. Primosome assembly occurs via a 'hand-off' mechanism. PriA binds to replication forks, subsequently PriB then DnaT bind; DnaT then displaces ssDNA to generate the helicase loading substrate.

Involved in the restart of stalled replication forks, which reloads the replicative helicase on sites other than the origin of replication; the PriA-PriB pathway is the major replication restart pathway. During primosome assembly it facilitates complex formation between PriA and DnaT on DNA; stabilizes PriA on DNA. Stimulates the DNA unwinding activity of PriA helicase. The polypeptide is Replication restart protein PriB (Shewanella sediminis (strain HAW-EB3)).